A 168-amino-acid polypeptide reads, in one-letter code: Zinc-finger homeodomain protein 14 (168 aa).

The ZF-HD dimerization-type; degenerate zinc finger occupies 7–51 (YRECMRNHAAKLGSYAIDGCREYSQPSTGDLCVACGCHRSYHRRI). Residues 76 to 103 (ARLKWKTAEERNEEEEDDTEETSTEEKM) are a coiled coil. A disordered region spans residues 82 to 112 (TAEERNEEEEDDTEETSTEEKMTVQRRRKSK). Over residues 86–98 (RNEEEEDDTEETS) the composition is skewed to acidic residues. Positions 106–168 (QRRRKSKFTA…WVNNNKKFYH (63 aa)) form a DNA-binding region, homeobox.

In terms of assembly, homo- and heterodimer with other ZFHD proteins. Interacts with ZHD11. In terms of tissue distribution, mostly expressed in flowers and stems.

The protein localises to the nucleus. Putative transcription factor. This chain is Zinc-finger homeodomain protein 14 (ZHD14), found in Arabidopsis thaliana (Mouse-ear cress).